The primary structure comprises 644 residues: 3D-(3,5/4)-trihydroxycyclohexane-1,2-dione hydrolase 1 (644 aa).

Position 65 (Glu65) interacts with thiamine diphosphate. The interval 442–522 is thiamine pyrophosphate binding; sequence SLPGDLQRMW…INVLLFDNSG (81 aa). Positions 493 and 520 each coordinate Mg(2+).

Belongs to the TPP enzyme family. Requires Mg(2+) as cofactor. The cofactor is thiamine diphosphate.

The catalysed reaction is 3D-3,5/4-trihydroxycyclohexane-1,2-dione + H2O = 5-deoxy-D-glucuronate + H(+). It functions in the pathway polyol metabolism; myo-inositol degradation into acetyl-CoA; acetyl-CoA from myo-inositol: step 3/7. Involved in the cleavage of the C1-C2 bond of 3D-(3,5/4)-trihydroxycyclohexane-1,2-dione (THcHDO) to yield 5-deoxy-glucuronate (5DG). The protein is 3D-(3,5/4)-trihydroxycyclohexane-1,2-dione hydrolase 1 of Bacillus cereus (strain ZK / E33L).